Reading from the N-terminus, the 771-residue chain is Rho GTPase-activating protein 26 (771 aa).

The BAR domain occupies glutamate 7–alanine 262. The PH domain occupies proline 265–proline 369. Residues alanine 383 to phenylalanine 568 enclose the Rho-GAP domain. Residues proline 575 to valine 712 are disordered. Positions histidine 608–asparagine 617 are enriched in basic and acidic residues. A compositionally biased stretch (low complexity) spans serine 618–serine 637. Composition is skewed to polar residues over residues threonine 638–alanine 650 and arginine 662–asparagine 671. Composition is skewed to low complexity over residues serine 673–serine 683 and proline 691–valine 712. An SH3 domain is found at serine 713–leucine 771.

Its subcellular location is the cell junction. It is found in the focal adhesion. The protein resides in the cytoplasm. It localises to the cytoskeleton. The protein localises to the endosome membrane. GTPase-activating protein for rhoa and cdc42. May be involved in the regulation of neosynthesized protein export through a Rab-endososomal dependent export route. The protein is Rho GTPase-activating protein 26 (arhgap26) of Xenopus laevis (African clawed frog).